Here is a 195-residue protein sequence, read N- to C-terminus: Pyridoxal 5'-phosphate synthase subunit PdxT (195 aa).

46-48 (GES) is a binding site for L-glutamine. The active-site Nucleophile is the cysteine 78. Residues arginine 105 and 133-134 (IR) contribute to the L-glutamine site. Residues histidine 169 and glutamate 171 each act as charge relay system in the active site.

This sequence belongs to the glutaminase PdxT/SNO family. In terms of assembly, in the presence of PdxS, forms a dodecamer of heterodimers. Only shows activity in the heterodimer.

It catalyses the reaction aldehydo-D-ribose 5-phosphate + D-glyceraldehyde 3-phosphate + L-glutamine = pyridoxal 5'-phosphate + L-glutamate + phosphate + 3 H2O + H(+). The catalysed reaction is L-glutamine + H2O = L-glutamate + NH4(+). Its pathway is cofactor biosynthesis; pyridoxal 5'-phosphate biosynthesis. Its function is as follows. Catalyzes the hydrolysis of glutamine to glutamate and ammonia as part of the biosynthesis of pyridoxal 5'-phosphate. The resulting ammonia molecule is channeled to the active site of PdxS. This chain is Pyridoxal 5'-phosphate synthase subunit PdxT, found in Shouchella clausii (strain KSM-K16) (Alkalihalobacillus clausii).